A 332-amino-acid chain; its full sequence is CXADR-like membrane protein (332 aa).

Positions 1-19 (MHTLIRSFLGLWYVLGALA) are cleaved as a signal peptide. Ig-like C2-type domains are found at residues 20–123 (QTEI…SFIT) and 130–220 (PSEL…VDVT). Residues 20 to 231 (QTEIKLVADE…QSVSNTGILA (212 aa)) are Extracellular-facing. Intrachain disulfides connect Cys-35–Cys-109 and Cys-151–Cys-204. Residue Asn-193 is glycosylated (N-linked (GlcNAc...) asparagine). The chain crosses the membrane as a helical span at residues 232-252 (GVACGVVVGVFLIFFTVWLLF). Topologically, residues 253-332 (HKKEFKKREE…EQRHHCLEKI (80 aa)) are cytoplasmic. The disordered stretch occupies residues 276–332 (PKARLVKPGSSSSDSRSSQSGSSSTRSTTNSASRSQRTHSTQETPHGEQRHHCLEKI). Over residues 285–310 (SSSSDSRSSQSGSSSTRSTTNSASRS) the composition is skewed to low complexity. A compositionally biased stretch (basic and acidic residues) spans 320 to 332 (PHGEQRHHCLEKI).

It localises to the cell junction. Its subcellular location is the tight junction. The protein localises to the cell membrane. In Xenopus tropicalis (Western clawed frog), this protein is CXADR-like membrane protein (clmp).